The following is a 411-amino-acid chain: Ornithine cyclodeaminase (411 aa).

Residues asparagine 236, alanine 237, aspartate 315, threonine 347, methionine 348, leucine 349, histidine 350, aspartate 368, aspartate 391, and valine 392 each coordinate NAD(+).

Belongs to the AgrE/ArgZ ornithine cyclodeaminase family. Requires NAD(+) as cofactor.

The catalysed reaction is L-ornithine = L-proline + NH4(+). In terms of biological role, catalyzes the conversion of ornithine to proline, with the release of ammonia. The chain is Ornithine cyclodeaminase from Methanothermobacter thermautotrophicus (strain ATCC 29096 / DSM 1053 / JCM 10044 / NBRC 100330 / Delta H) (Methanobacterium thermoautotrophicum).